The following is a 296-amino-acid chain: 4-hydroxy-tetrahydrodipicolinate synthase (296 aa).

A pyruvate-binding site is contributed by T49. Y137 (proton donor/acceptor) is an active-site residue. The active-site Schiff-base intermediate with substrate is K165. I207 serves as a coordination point for pyruvate.

It belongs to the DapA family. In terms of assembly, homotetramer; dimer of dimers.

It is found in the cytoplasm. It carries out the reaction L-aspartate 4-semialdehyde + pyruvate = (2S,4S)-4-hydroxy-2,3,4,5-tetrahydrodipicolinate + H2O + H(+). Its pathway is amino-acid biosynthesis; L-lysine biosynthesis via DAP pathway; (S)-tetrahydrodipicolinate from L-aspartate: step 3/4. Functionally, catalyzes the condensation of (S)-aspartate-beta-semialdehyde [(S)-ASA] and pyruvate to 4-hydroxy-tetrahydrodipicolinate (HTPA). This chain is 4-hydroxy-tetrahydrodipicolinate synthase, found in Bradyrhizobium diazoefficiens (strain JCM 10833 / BCRC 13528 / IAM 13628 / NBRC 14792 / USDA 110).